The following is a 149-amino-acid chain: Calmodulin-like protein 3 (149 aa).

4 EF-hand domains span residues 8 to 43 (EQVTEFKEAFSLFDKDGDGCITTRELGTVMRSLGQN), 44 to 79 (PTEAELRDMMSEIDRDGNGTVDFPEFLGMMARKMKD), 81 to 116 (DNEEEIREAFRVFDKDGNGFVSAAELRHVMTRLGEK), and 117 to 149 (LSDEEVDEMIRAADTDGDGQVNYEEFVRVLVSK). Positions 21, 23, 25, 27, 32, 57, 59, 61, 63, 68, 94, 96, 98, 105, 130, 132, 134, 136, and 141 each coordinate Ca(2+).

Belongs to the calmodulin family. In terms of assembly, interacts with MYO10, the interaction is calcium-dependent and essential for MYO10 function in filopodial extension. In terms of tissue distribution, expressed in normal mammary, prostate, cervical, and epidermal tissues. It is greatly reduced or undetectable in transformed cells.

Functionally, may function as a specific light chain of unconventional myosin-10 (MYO10), also enhances MYO10 translation, possibly by acting as a chaperone for the emerging MYO10 heavy chain protein. May compete with calmodulin by binding, with different affinities, to cellular substrates. This is Calmodulin-like protein 3 (CALML3) from Homo sapiens (Human).